Consider the following 404-residue polypeptide: Trigger factor (404 aa).

Positions 160–225 (KDHLFVRTEE…VLEVKTLKLP (66 aa)) constitute a PPIase FKBP-type domain.

Belongs to the FKBP-type PPIase family. Tig subfamily.

It is found in the cytoplasm. It carries out the reaction [protein]-peptidylproline (omega=180) = [protein]-peptidylproline (omega=0). Involved in protein export. Acts as a chaperone by maintaining the newly synthesized protein in an open conformation. Functions as a peptidyl-prolyl cis-trans isomerase. The chain is Trigger factor from Thermus thermophilus (strain ATCC 27634 / DSM 579 / HB8).